The following is a 209-amino-acid chain: Cytidylate kinase (209 aa).

ATP is bound at residue 9–17 (GPAAAGKGT).

It belongs to the cytidylate kinase family. Type 1 subfamily.

It is found in the cytoplasm. It carries out the reaction CMP + ATP = CDP + ADP. The catalysed reaction is dCMP + ATP = dCDP + ADP. This is Cytidylate kinase from Granulibacter bethesdensis (strain ATCC BAA-1260 / CGDNIH1).